Here is a 430-residue protein sequence, read N- to C-terminus: Asparagine--tRNA ligase (430 aa).

It belongs to the class-II aminoacyl-tRNA synthetase family. Homodimer.

Its subcellular location is the cytoplasm. The enzyme catalyses tRNA(Asn) + L-asparagine + ATP = L-asparaginyl-tRNA(Asn) + AMP + diphosphate + H(+). The protein is Asparagine--tRNA ligase of Staphylococcus aureus (strain bovine RF122 / ET3-1).